A 193-amino-acid polypeptide reads, in one-letter code: p53 apoptosis effector related to PMP-22 (193 aa).

4 helical membrane passes run 12–32, 79–99, 110–130, and 151–171; these read RWIL…ALAG, AMLF…FFAL, VIGG…VIYP, and WAYG…FFFC.

Belongs to the TMEM47 family. In terms of assembly, (Microbial infection) Interacts with S.typhimurium sipA and sctB1/sipC. As to expression, expressed in skin, heart, placental, liver, pancreas, keratinocytes and dermal fibroblasts. May translocate to the intestinal apical epithelial cell surface via sipA and sctB1/sipC-promoted exocytic translocation following infection by S. Typhimurium.

The protein localises to the cell junction. Its subcellular location is the desmosome. It is found in the cell membrane. The protein resides in the cytoplasm. Component of intercellular desmosome junctions. Plays a role in stratified epithelial integrity and cell-cell adhesion by promoting desmosome assembly. Thereby plays a role in barrier function of the skin against infection. Plays a role in mammary epithelial tissue homeostasis and remodeling during and after pregnancy, potentially via its involvement in desmosome cell-cell junctions. Required for tooth enamel development via facilitating desmosome-mediated ameloblast adhesion to the stratum intermedium during the transitional stage of amelogenesis. May also play a role in downstream transcriptional regulation of other genes involved in amelogenesis such as AMBN, ENAM, MMP20 and KLK4. Plays a role as an effector in the TP53-dependent apoptotic pathway. Positively regulates apoptosis in T-helper 17 (Th17) cell populations via caspase-dependent signaling. Promotes neutrophil transepithelial migration in response to chemoattractants such as hepoxilin A3 (HXA3), N-Formylmethionyl-leucyl-phenylalanine (fMLP) and CXCL8/IL-8. Required for neutrophil transepithelial migration in response to S.typhimurium infection. May act as a positive regulator of endothelial cell apoptosis in response to blood flow-derived shear stress. The chain is p53 apoptosis effector related to PMP-22 from Homo sapiens (Human).